Reading from the N-terminus, the 759-residue chain is Forkhead box protein M1 (759 aa).

2 disordered regions span residues 1 to 54 (MRTS…AESS) and 94 to 165 (KGKE…QRQE). The span at 36 to 54 (PGQQEPTQAQASQDVAESS) shows a compositional bias: polar residues. Low complexity predominate over residues 141–151 (LGPKPGAKGVP). Residues lysine 200 and lysine 324 each participate in a glycyl lysine isopeptide (Lys-Gly) (interchain with G-Cter in SUMO2) cross-link. Residues 234 to 326 (ERPPYSYMAM…LTLDQVFKPL (93 aa)) constitute a DNA-binding region (fork-head). The tract at residues 328–349 (PGSPQSPEHLESQQKRPNPELR) is disordered. Serine 330 is modified (phosphoserine). Over residues 335 to 349 (EHLESQQKRPNPELR) the composition is skewed to basic and acidic residues. Residue lysine 355 forms a Glycyl lysine isopeptide (Lys-Gly) (interchain with G-Cter in SUMO2) linkage. Serine 375 is modified (phosphoserine; by CHEK2). Glycyl lysine isopeptide (Lys-Gly) (interchain with G-Cter in SUMO2) cross-links involve residues lysine 421 and lysine 439. Serine 521 is modified (phosphoserine). Disordered stretches follow at residues 530–556 (LVTKRREKREVSRSRRKQHLQPPCLDE), 572–643 (MEIL…PQGA), and 681–706 (LASDPFSSSPPPHLEAKPGSPELQVP). Positions 531 to 542 (VTKRREKREVSR) are enriched in basic and acidic residues. A compositionally biased stretch (polar residues) spans 604–613 (PVSSTPSKSV). Position 608 is a phosphothreonine; by CDK1 (threonine 608). Threonine 624 is modified (phosphothreonine). Serine 726 and serine 735 each carry phosphoserine; by PLK1.

Phosphorylated in M (mitotic) phase. Phosphorylation by the checkpoint kinase CHEK2 in response to DNA damage increases the FOXM1 protein stability probably stimulating the transcription of genes involved in DNA repair. Phosphorylated by CDK1 in late S and G2 phases, creating docking sites for the POLO box domains of PLK1. Subsequently, PLK1 binds and phosphorylates FOXM1, leading to activation of transcriptional activity and subsequent enhanced expression of key mitotic regulators. Phosphorylated by GSK3B leading to ubiquitination and proteasomal degradation. Highly expressed in thymus and testis, but weakly in intestine and lung. Appears to be expressed only in adult organs containing proliferating/cycling cells or in response to growth factors.

The protein resides in the nucleus. Transcription factor regulating the expression of cell cycle genes essential for DNA replication and mitosis. Plays a role in the control of cell proliferation. Also plays a role in DNA break repair, participating in the DNA damage checkpoint response. Promotes transcription of PHB2. This chain is Forkhead box protein M1 (Foxm1), found in Rattus norvegicus (Rat).